A 162-amino-acid chain; its full sequence is MSPVESSNVEKDIFRDTPVRFLGKRYANEVGEAFRSLVKPVVVKFSYVVAFGYVAADSVDKGFKESKKPHANDTEKAKRVAIIAVDTVLWQTFASVLIPGFTINRFCFFTNMLLEKSTKLPTNLRKWTVTALGLATIPFIVHPIDAFVEDAMNKTARKVYNY.

Helical transmembrane passes span 36-56 (SLVK…YVAA), 81-101 (AIIA…IPGF), and 128-148 (TVTA…DAFV).

The protein belongs to the MTFP1 family.

The protein resides in the mitochondrion inner membrane. In terms of biological role, involved in the mitochondrial division probably by regulating membrane fission. Loss-of-function leads to apoptosis. This chain is Mitochondrial fission process protein 1, found in Caenorhabditis briggsae.